The primary structure comprises 1814 residues: U3 small nucleolar RNA-associated protein 10 (1814 aa).

An HEAT 1 repeat occupies 583–620 (LDFQALLPFLLVALTDASERVRREAAAALAAVGSLYKK). 2 helical membrane-spanning segments follow: residues 942-962 (IQSG…AIVN) and 998-1018 (ALLL…HSVM). HEAT repeat units follow at residues 1042-1079 (QTID…AFEH), 1249-1286 (LTLV…QNPE), 1293-1331 (IRVL…KYGK), and 1770-1807 (ALLP…VLGE).

Belongs to the HEATR1/UTP10 family. As to quaternary structure, component of the ribosomal small subunit (SSU) processome.

It localises to the nucleus. The protein resides in the nucleolus. It is found in the membrane. In terms of biological role, involved in nucleolar processing of pre-18S ribosomal RNA. Involved in ribosome biosynthesis. This is U3 small nucleolar RNA-associated protein 10 from Neosartorya fischeri (strain ATCC 1020 / DSM 3700 / CBS 544.65 / FGSC A1164 / JCM 1740 / NRRL 181 / WB 181) (Aspergillus fischerianus).